A 361-amino-acid chain; its full sequence is Trans-enoyl reductase gkaC (361 aa).

The 343-residue stretch at 15 to 357 (EDVGSFEISR…RREISGKKMV (343 aa)) folds into the Enoyl reductase (ER) domain. Residues 48–51 (CDWK), 172–175 (SSAS), 195–198 (SPKN), Y213, 260–261 (FE), and 351–352 (IS) each bind NADP(+).

The protein belongs to the zinc-containing alcohol dehydrogenase family. As to quaternary structure, monomer.

It functions in the pathway mycotoxin biosynthesis. Its function is as follows. Trans-enoyl reductasee; part of the gene cluster that mediates the biosynthesis of GKK1032, fungal natural products containing a macrocyclic para-cyclophane connected to a decahydrofluorene ring system that show potent antitumor activities. Within the pathway, the PKS-NRPS gkaA, with the help of the trans-enoyl reductase gkaC, synthesize the polyketide-tyrosyl acyl thioester product which can be reductively off-loaded by the terminal reductase (R) domain in gkaA. The PKS module of gkaA acts in combination with the trans-acting enoyl reductase gkaC to produce a methylated polyketide attached to the ACP domain. In parallel, the adenylation (A) domain of the NRPS module activated L-tyrosine, which is then transferred to the ACP domain. The condensation (C) domain subsequently links this group to the polyketide chain, forming an enzyme-bound amide. The alpha/beta hydrolase gkaG is then required to catalyze the subsequent Knoevenagel condensation that affords the 3-pyrrolin-2-one ring, whereas the three proteins gkaB, gkadX and gkaZ then function synergistically to form the cyclophane. This chain is Trans-enoyl reductase gkaC, found in Penicillium citrinum.